The following is a 431-amino-acid chain: Asparagine--tRNA ligase 1 (431 aa).

It belongs to the class-II aminoacyl-tRNA synthetase family. Homodimer.

Its subcellular location is the cytoplasm. It carries out the reaction tRNA(Asn) + L-asparagine + ATP = L-asparaginyl-tRNA(Asn) + AMP + diphosphate + H(+). The chain is Asparagine--tRNA ligase 1 (asnS1) from Lactiplantibacillus plantarum (strain ATCC BAA-793 / NCIMB 8826 / WCFS1) (Lactobacillus plantarum).